We begin with the raw amino-acid sequence, 357 residues long: Membrane-bound lytic murein transglycosylase C (357 aa).

The signal sequence occupies residues 1–15 (MKKYLLLALLPFLYA). Residue Cys16 is the site of N-palmitoyl cysteine attachment. Residue Cys16 is the site of S-diacylglycerol cysteine attachment.

It belongs to the transglycosylase Slt family.

It is found in the cell outer membrane. It catalyses the reaction Exolytic cleavage of the (1-&gt;4)-beta-glycosidic linkage between N-acetylmuramic acid (MurNAc) and N-acetylglucosamine (GlcNAc) residues in peptidoglycan, from either the reducing or the non-reducing ends of the peptidoglycan chains, with concomitant formation of a 1,6-anhydrobond in the MurNAc residue.. Its function is as follows. Murein-degrading enzyme. May play a role in recycling of muropeptides during cell elongation and/or cell division. In Haemophilus influenzae (strain PittEE), this protein is Membrane-bound lytic murein transglycosylase C.